Reading from the N-terminus, the 335-residue chain is NADH-quinone oxidoreductase subunit H (335 aa).

8 consecutive transmembrane segments (helical) span residues 11–31 (VIISVVKAIVILLAVVVAGAL), 81–101 (VIFTLAPVVAMSALLIAFAVI), 114–134 (IGLLFFFAMAGLSVYAVLFAG), 154–174 (VSYEVFMGLALMGIVVQVGSF), 187–207 (LWFIIPQFFGFCTFFIAGVAV), 238–258 (FFVGEYIGIILISALLVTLFF), 270–290 (QLAFFWFFLKTAFFIMLFILL), and 309–329 (FCLPLTLINLLVTAAVVLLNT).

This sequence belongs to the complex I subunit 1 family. In terms of assembly, NDH-1 is composed of 13 different subunits. Subunits NuoA, H, J, K, L, M, N constitute the membrane sector of the complex.

It localises to the cell inner membrane. The catalysed reaction is a quinone + NADH + 5 H(+)(in) = a quinol + NAD(+) + 4 H(+)(out). NDH-1 shuttles electrons from NADH, via FMN and iron-sulfur (Fe-S) centers, to quinones in the respiratory chain. The immediate electron acceptor for the enzyme in this species is believed to be ubiquinone. Couples the redox reaction to proton translocation (for every two electrons transferred, four hydrogen ions are translocated across the cytoplasmic membrane), and thus conserves the redox energy in a proton gradient. This subunit may bind ubiquinone. This Pseudomonas fluorescens (strain SBW25) protein is NADH-quinone oxidoreductase subunit H.